The sequence spans 79 residues: UPF0154 protein SAG1601 (79 aa).

A helical membrane pass occupies residues 5 to 25 (IWILLIIVALFGGLVGGIFIA).

It belongs to the UPF0154 family.

It localises to the membrane. This chain is UPF0154 protein SAG1601, found in Streptococcus agalactiae serotype V (strain ATCC BAA-611 / 2603 V/R).